Consider the following 218-residue polypeptide: Probable septum site-determining protein MinC (218 aa).

Belongs to the MinC family. Interacts with MinD and FtsZ.

Cell division inhibitor that blocks the formation of polar Z ring septums. Rapidly oscillates between the poles of the cell to destabilize FtsZ filaments that have formed before they mature into polar Z rings. Prevents FtsZ polymerization. This is Probable septum site-determining protein MinC from Moorella thermoacetica (strain ATCC 39073 / JCM 9320).